The following is a 107-amino-acid chain: NADH dehydrogenase [ubiquinone] 1 beta subcomplex subunit 10-A (107 aa).

Positions 1–23 (MGRKKGLPEFEESAPDGFDPENP) are disordered.

This sequence belongs to the complex I NDUFB10 subunit family. As to quaternary structure, complex I is composed of at least 49 different subunits.

It localises to the mitochondrion inner membrane. Its function is as follows. Accessory subunit of the mitochondrial membrane respiratory chain NADH dehydrogenase (Complex I), that is believed not to be involved in catalysis. Complex I functions in the transfer of electrons from NADH to the respiratory chain. The immediate electron acceptor for the enzyme is believed to be ubiquinone. The protein is NADH dehydrogenase [ubiquinone] 1 beta subcomplex subunit 10-A of Arabidopsis thaliana (Mouse-ear cress).